A 130-amino-acid polypeptide reads, in one-letter code: Large ribosomal subunit protein bL17 (130 aa).

This sequence belongs to the bacterial ribosomal protein bL17 family. Part of the 50S ribosomal subunit. Contacts protein L32.

This chain is Large ribosomal subunit protein bL17, found in Buchnera aphidicola subsp. Acyrthosiphon pisum (strain 5A).